The chain runs to 730 residues: Pheromone-processing carboxypeptidase KEX1 (730 aa).

Positions methionine 1–glycine 19 are cleaved as a signal peptide. Over phenylalanine 20 to lysine 599 the chain is Lumenal. N-linked (GlcNAc...) asparagine glycosylation occurs at asparagine 60. Active-site residues include serine 181, aspartate 376, and histidine 441. The disordered stretch occupies residues serine 475–aspartate 590. Over residues glutamate 486–asparagine 497 the composition is skewed to basic and acidic residues. 2 N-linked (GlcNAc...) asparagine glycosylation sites follow: asparagine 497 and asparagine 507. Acidic residues predominate over residues glutamate 498–aspartate 514. The span at glycine 515–aspartate 526 shows a compositional bias: basic and acidic residues. 2 stretches are compositionally biased toward acidic residues: residues aspartate 527 to aspartate 557 and asparagine 579 to aspartate 590. The chain crosses the membrane as a helical span at residues alanine 600–serine 620. Over aspartate 621–histidine 730 the chain is Cytoplasmic. Residues glutamate 684–histidine 730 are disordered. A compositionally biased stretch (basic residues) spans lysine 699–lysine 709. A compositionally biased stretch (acidic residues) spans aspartate 717–histidine 730.

This sequence belongs to the peptidase S10 family.

Its subcellular location is the golgi apparatus. It is found in the trans-Golgi network membrane. It catalyses the reaction Preferential release of a C-terminal arginine or lysine residue.. Functionally, protease with a carboxypeptidase B-like function involved in the C-terminal processing of the lysine and arginine residues from protein precursors. Promotes cell fusion and is involved in the programmed cell death. The sequence is that of Pheromone-processing carboxypeptidase KEX1 (KEX1) from Candida glabrata (strain ATCC 2001 / BCRC 20586 / JCM 3761 / NBRC 0622 / NRRL Y-65 / CBS 138) (Yeast).